A 383-amino-acid chain; its full sequence is Cytochrome b (383 aa).

Transmembrane regions (helical) follow at residues 30-50 (FGSLLGLCLGIQILTGVLLAM), 74-96 (WILRYVHANGASLFFICVYCHIG), 109-129 (TWIVGVLIYFIMMLTAFIGYV), and 175-195 (FFSLHYLLPFVLVGLVLAHLL). The heme b site is built by His80 and His94. Residues His179 and His193 each contribute to the heme b site. His198 contributes to the a ubiquinone binding site. Transmembrane regions (helical) follow at residues 221–241 (FTIKDILGFLILLGVFVIIGI), 289–309 (GVLALFASILVLLLMPILDRS), 320–340 (AKFFFWFIVGDFFILTWIGSA), and 345–365 (EPYVLIGRIATIFYFGYFLVL).

The protein belongs to the cytochrome b family. In terms of assembly, the main subunits of complex b-c1 are: cytochrome b, cytochrome c1 and the Rieske protein. Heme b serves as cofactor.

The protein localises to the mitochondrion inner membrane. Component of the ubiquinol-cytochrome c reductase complex (complex III or cytochrome b-c1 complex) that is part of the mitochondrial respiratory chain. The b-c1 complex mediates electron transfer from ubiquinol to cytochrome c. Contributes to the generation of a proton gradient across the mitochondrial membrane that is then used for ATP synthesis. The protein is Cytochrome b (mt:Cyt-b) of Trichoplax adhaerens (Trichoplax reptans).